A 405-amino-acid polypeptide reads, in one-letter code: GTPase Obg (405 aa).

The region spanning 1-159 is the Obg domain; the sequence is MRFIDEAVVT…KVLKFELKVV (159 aa). One can recognise an OBG-type G domain in the interval 160-333; sequence ADVGLIGLPN…IKYHLMNEIE (174 aa). GTP is bound by residues 166–173, 191–195, 213–216, 283–286, and 314–316; these read GLPNAGKS, FTTLV, DIPG, NKID, and ATL. The Mg(2+) site is built by Ser173 and Thr193. Residues 371 to 382 show a composition bias toward basic and acidic residues; sequence YRAARKAAREGT. The disordered stretch occupies residues 371-405; sequence YRAARKAAREGTDLSDDDFDGSDDDDDGVEVIYAP. Residues 383 to 399 show a composition bias toward acidic residues; the sequence is DLSDDDFDGSDDDDDGV.

Belongs to the TRAFAC class OBG-HflX-like GTPase superfamily. OBG GTPase family. As to quaternary structure, monomer. The cofactor is Mg(2+).

It localises to the cytoplasm. Its function is as follows. An essential GTPase which binds GTP, GDP and possibly (p)ppGpp with moderate affinity, with high nucleotide exchange rates and a fairly low GTP hydrolysis rate. Plays a role in control of the cell cycle, stress response, ribosome biogenesis and in those bacteria that undergo differentiation, in morphogenesis control. The sequence is that of GTPase Obg from Psychrobacter arcticus (strain DSM 17307 / VKM B-2377 / 273-4).